A 202-amino-acid chain; its full sequence is LexA repressor (202 aa).

A DNA-binding region (H-T-H motif) is located at residues 28–48 (RAEIASRLGFRSPNAAEEHLK). Catalysis depends on for autocatalytic cleavage activity residues serine 119 and lysine 156.

This sequence belongs to the peptidase S24 family. In terms of assembly, homodimer.

It carries out the reaction Hydrolysis of Ala-|-Gly bond in repressor LexA.. Its function is as follows. Represses a number of genes involved in the response to DNA damage (SOS response), including recA and lexA. Binds to the 16 bp palindromic sequence 5'-CTGTATATATATACAG-3'. In the presence of single-stranded DNA, RecA interacts with LexA causing an autocatalytic cleavage which disrupts the DNA-binding part of LexA, leading to derepression of the SOS regulon and eventually DNA repair. The polypeptide is LexA repressor (Sodalis glossinidius (strain morsitans)).